The primary structure comprises 483 residues: Acetyl-coenzyme A carboxylase carboxyl transferase subunit beta, chloroplastic (483 aa).

Residues Leu-221–Pro-483 enclose the CoA carboxyltransferase N-terminal domain. Residues Cys-225, Cys-228, Cys-244, and Cys-247 each coordinate Zn(2+). The C4-type zinc finger occupies Cys-225–Cys-247.

This sequence belongs to the AccD/PCCB family. Acetyl-CoA carboxylase is a heterohexamer composed of biotin carboxyl carrier protein, biotin carboxylase and 2 subunits each of ACCase subunit alpha and ACCase plastid-coded subunit beta (accD). Requires Zn(2+) as cofactor.

The protein localises to the plastid. Its subcellular location is the chloroplast stroma. The enzyme catalyses N(6)-carboxybiotinyl-L-lysyl-[protein] + acetyl-CoA = N(6)-biotinyl-L-lysyl-[protein] + malonyl-CoA. The protein operates within lipid metabolism; malonyl-CoA biosynthesis; malonyl-CoA from acetyl-CoA: step 1/1. Its function is as follows. Component of the acetyl coenzyme A carboxylase (ACC) complex. Biotin carboxylase (BC) catalyzes the carboxylation of biotin on its carrier protein (BCCP) and then the CO(2) group is transferred by the transcarboxylase to acetyl-CoA to form malonyl-CoA. The chain is Acetyl-coenzyme A carboxylase carboxyl transferase subunit beta, chloroplastic from Nuphar advena (Common spatterdock).